We begin with the raw amino-acid sequence, 501 residues long: ATP synthase subunit alpha (501 aa).

169 to 176 (GDRQTGKT) serves as a coordination point for ATP.

It belongs to the ATPase alpha/beta chains family. In terms of assembly, F-type ATPases have 2 components, CF(1) - the catalytic core - and CF(0) - the membrane proton channel. CF(1) has five subunits: alpha(3), beta(3), gamma(1), delta(1), epsilon(1). CF(0) has three main subunits: a(1), b(2) and c(9-12). The alpha and beta chains form an alternating ring which encloses part of the gamma chain. CF(1) is attached to CF(0) by a central stalk formed by the gamma and epsilon chains, while a peripheral stalk is formed by the delta and b chains.

The protein localises to the cell membrane. It catalyses the reaction ATP + H2O + 4 H(+)(in) = ADP + phosphate + 5 H(+)(out). Produces ATP from ADP in the presence of a proton gradient across the membrane. The alpha chain is a regulatory subunit. This Streptococcus agalactiae serotype Ia (strain ATCC 27591 / A909 / CDC SS700) protein is ATP synthase subunit alpha.